Here is a 448-residue protein sequence, read N- to C-terminus: MTATPAPRGPAPGAAPKISFVSLGCPKALVDSERILTHLRAEGYELARRHDGADVVIVNTCGFLDSAKAESLSAIGEAMAENGRVIVTGCMGAQPEEIREKYPDLLAVTGPQAYESVVAAVHEAVPPAHDPFLDLVPPQGIKLTPRHYAYLKISEGCSNRCSFCIIPSLRGNLVSRPAADVLREAEKLVKAGVKELLVVSQDTSAYGVDIRYSESPWRDRQVRAKFYDLTRELGELGAWVRLHYVYPYPHVDEVIPLMAEGKVLPYLDMPLQHASPSVLKRMRRPGNQERQLDRIRSWRQTCPDLAIRSTFIVGFPGETEAEFEELLAWLQEAKLDRVGCFEYEPVAGATANALGDPVPPAVKAERKRRFMETQNGIALRLQRAKVGKRLPVIVDSVEGGVARGRSKADAPEIDGTVHAAFRRPVRVGDIVTVKIDRAEAYDLYGSVA.

One can recognise an MTTase N-terminal domain in the interval 16–126; it reads PKISFVSLGC…VVAAVHEAVP (111 aa). Cysteine 25, cysteine 61, cysteine 90, cysteine 157, cysteine 161, and cysteine 164 together coordinate [4Fe-4S] cluster. The 238-residue stretch at 143–380 folds into the Radical SAM core domain; it reads LTPRHYAYLK…METQNGIALR (238 aa). In terms of domain architecture, TRAM spans 383-448; sequence RAKVGKRLPV…EAYDLYGSVA (66 aa).

It belongs to the methylthiotransferase family. RimO subfamily. Requires [4Fe-4S] cluster as cofactor.

The protein resides in the cytoplasm. The catalysed reaction is L-aspartate(89)-[ribosomal protein uS12]-hydrogen + (sulfur carrier)-SH + AH2 + 2 S-adenosyl-L-methionine = 3-methylsulfanyl-L-aspartate(89)-[ribosomal protein uS12]-hydrogen + (sulfur carrier)-H + 5'-deoxyadenosine + L-methionine + A + S-adenosyl-L-homocysteine + 2 H(+). Catalyzes the methylthiolation of an aspartic acid residue of ribosomal protein uS12. This chain is Ribosomal protein uS12 methylthiotransferase RimO, found in Methylobacterium radiotolerans (strain ATCC 27329 / DSM 1819 / JCM 2831 / NBRC 15690 / NCIMB 10815 / 0-1).